The primary structure comprises 226 residues: Ribonuclease 3 (226 aa).

Positions 6–128 (IQKLQKILGY…LIGSIFLDSN (123 aa)) constitute an RNase III domain. E41 contacts Mg(2+). The active site involves D45. Residues N114 and E117 each coordinate Mg(2+). The active site involves E117. Residues 155-225 (DPKTRLQEYL…AQNALIKLGI (71 aa)) form the DRBM domain.

It belongs to the ribonuclease III family. Homodimer. The cofactor is Mg(2+).

The protein localises to the cytoplasm. The catalysed reaction is Endonucleolytic cleavage to 5'-phosphomonoester.. In terms of biological role, digests double-stranded RNA. Involved in the processing of primary rRNA transcript to yield the immediate precursors to the large and small rRNAs (23S and 16S). Processes some mRNAs, and tRNAs when they are encoded in the rRNA operon. Processes pre-crRNA and tracrRNA of type II CRISPR loci if present in the organism. The sequence is that of Ribonuclease 3 from Buchnera aphidicola subsp. Baizongia pistaciae (strain Bp).